Reading from the N-terminus, the 414-residue chain is S-adenosylmethionine synthase (414 aa).

Histidine 11 lines the ATP pocket. Residue aspartate 13 coordinates Mg(2+). Glutamate 39 provides a ligand contact to K(+). Residues glutamate 52 and glutamine 95 each contribute to the L-methionine site. The flexible loop stretch occupies residues 95-105 (QSPDIAQGVNL). Residues 169-171 (DGK), 245-246 (KF), aspartate 254, 260-261 (RK), alanine 277, and lysine 281 each bind ATP. Aspartate 254 lines the L-methionine pocket. Lysine 285 contributes to the L-methionine binding site.

It belongs to the AdoMet synthase family. In terms of assembly, homotetramer; dimer of dimers. Requires Mg(2+) as cofactor. The cofactor is K(+).

The protein localises to the cytoplasm. It carries out the reaction L-methionine + ATP + H2O = S-adenosyl-L-methionine + phosphate + diphosphate. Its pathway is amino-acid biosynthesis; S-adenosyl-L-methionine biosynthesis; S-adenosyl-L-methionine from L-methionine: step 1/1. Its function is as follows. Catalyzes the formation of S-adenosylmethionine (AdoMet) from methionine and ATP. The overall synthetic reaction is composed of two sequential steps, AdoMet formation and the subsequent tripolyphosphate hydrolysis which occurs prior to release of AdoMet from the enzyme. The sequence is that of S-adenosylmethionine synthase from Synechococcus sp. (strain JA-3-3Ab) (Cyanobacteria bacterium Yellowstone A-Prime).